The sequence spans 187 residues: Ion-translocating oxidoreductase complex subunit B (187 aa).

The hydrophobic stretch occupies residues 1–26; that stretch reads MTHILFAVLVLALLALAFGIILGFAA. The region spanning 32-90 is the 4Fe-4S domain; it reads EADPIVDQLDALLPQTQCGQCGYPGCKPYAEALANGDQINKCVPGGDATMRKIADLMGV. 12 residues coordinate [4Fe-4S] cluster: Cys-49, Cys-52, Cys-57, Cys-73, Cys-115, Cys-118, Cys-121, Cys-125, Cys-145, Cys-148, Cys-151, and Cys-155. 4Fe-4S ferredoxin-type domains lie at 106–135 and 136–165; these read KVAFIHEDQCIGCTKCIQACPVDAIVGATK and AMHTVITDECTGCDLCVDPCPTDCIEMIPV.

This sequence belongs to the 4Fe4S bacterial-type ferredoxin family. RnfB subfamily. As to quaternary structure, the complex is composed of six subunits: RnfA, RnfB, RnfC, RnfD, RnfE and RnfG. The cofactor is [4Fe-4S] cluster.

It is found in the cell inner membrane. Functionally, part of a membrane-bound complex that couples electron transfer with translocation of ions across the membrane. The protein is Ion-translocating oxidoreductase complex subunit B of Aeromonas salmonicida (strain A449).